Here is a 332-residue protein sequence, read N- to C-terminus: DNA-directed RNA polymerase subunit alpha (332 aa).

The tract at residues 1–234 (MTVTISQVLR…DQLSVFGDFT (234 aa)) is alpha N-terminal domain (alpha-NTD). The alpha C-terminal domain (alpha-CTD) stretch occupies residues 248-332 (VDPVLLRPID…PGVSQYGMLG (85 aa)).

It belongs to the RNA polymerase alpha chain family. As to quaternary structure, homodimer. The RNAP catalytic core consists of 2 alpha, 1 beta, 1 beta' and 1 omega subunit. When a sigma factor is associated with the core the holoenzyme is formed, which can initiate transcription.

The catalysed reaction is RNA(n) + a ribonucleoside 5'-triphosphate = RNA(n+1) + diphosphate. In terms of biological role, DNA-dependent RNA polymerase catalyzes the transcription of DNA into RNA using the four ribonucleoside triphosphates as substrates. In Xylella fastidiosa (strain M12), this protein is DNA-directed RNA polymerase subunit alpha.